The following is a 483-amino-acid chain: Peroxisomal biogenesis factor 3 (483 aa).

Topologically, residues 1–14 (MTGNRSLVQRHRKK) are peroxisomal. A helical membrane pass occupies residues 15 to 35 (FVVSSVLFATLFATCAITVYF). At 36-483 (SKRWLYKQHL…SACVYSNFGL (448 aa)) the chain is on the cytoplasmic side. 2 disordered regions span residues 119–149 (GLSS…VSET) and 230–253 (NNLP…TRSI). Over residues 242–253 (SDGTIDTDTRSI) the composition is skewed to polar residues.

Belongs to the peroxin-3 family.

It is found in the peroxisome membrane. In terms of biological role, involved in peroxisome biosynthesis. This chain is Peroxisomal biogenesis factor 3 (PEX3), found in Kluyveromyces lactis (strain ATCC 8585 / CBS 2359 / DSM 70799 / NBRC 1267 / NRRL Y-1140 / WM37) (Yeast).